A 344-amino-acid chain; its full sequence is Arginine N-succinyltransferase (344 aa).

Leu-125 lines the succinyl-CoA pocket. Catalysis depends on His-229, which acts as the Proton donor.

This sequence belongs to the arginine N-succinyltransferase family.

It catalyses the reaction succinyl-CoA + L-arginine = N(2)-succinyl-L-arginine + CoA + H(+). Its pathway is amino-acid degradation; L-arginine degradation via AST pathway; L-glutamate and succinate from L-arginine: step 1/5. Catalyzes the transfer of succinyl-CoA to arginine to produce N(2)-succinylarginine. The sequence is that of Arginine N-succinyltransferase from Salmonella arizonae (strain ATCC BAA-731 / CDC346-86 / RSK2980).